The chain runs to 128 residues: Fluoride-specific ion channel FluC (128 aa).

The next 4 helical transmembrane spans lie at 3 to 23, 34 to 54, 65 to 85, and 102 to 122; these read FTTI…RSFT, LSFP…IGFL, INLK…FSTF, and FLNI…GFWI. Na(+)-binding residues include glycine 77 and threonine 80.

The protein belongs to the fluoride channel Fluc/FEX (TC 1.A.43) family.

The protein localises to the cell inner membrane. The enzyme catalyses fluoride(in) = fluoride(out). With respect to regulation, na(+) is not transported, but it plays an essential structural role and its presence is essential for fluoride channel function. Its function is as follows. Fluoride-specific ion channel. Important for reducing fluoride concentration in the cell, thus reducing its toxicity. The protein is Fluoride-specific ion channel FluC of Campylobacter fetus subsp. fetus (strain 82-40).